We begin with the raw amino-acid sequence, 213 residues long: Isomeliandiol synthase MOI2 (213 aa).

5 consecutive transmembrane segments (helical) span residues 18–38 (AALH…SWFI), 52–72 (VLCW…YYVF), 109–129 (IESM…YALA), 137–157 (ILQF…FLSA), and 171–191 (YWAY…LIAI). The 143-residue stretch at 48 to 190 (MDRVVLCWWA…IWVIVPALIA (143 aa)) folds into the EXPERA domain.

Belongs to the EBP family. In terms of tissue distribution, mainly expressed in petioles.

The protein localises to the membrane. It catalyses the reaction 7,8-epoxymelianol = isomeliandiol. It functions in the pathway secondary metabolite biosynthesis; terpenoid biosynthesis. Its function is as follows. Isomerase involved in the biosynthesis of limonoids triterpene natural products such as azadirachtin, an antifeedant widely used as bioinsecticide, and possessing many medicinal applications including anti-tumoral, anti-malarial, anti-rheumatic, antibacterial, anti-inflammatory, anti-pyretic and diuretic effects. Catalyzes the conversion of 7,8-epoxymelianol to isomeliandiol via skeletal rearrangements. The protein is Isomeliandiol synthase MOI2 of Melia azedarach (Chinaberry tree).